A 239-amino-acid polypeptide reads, in one-letter code: TPR repeat-containing protein TP_0282 (239 aa).

The chain crosses the membrane as a helical span at residues 21-43 (LLVGVLVAILGGLGLSAGCLLVM). TPR repeat units follow at residues 112 to 145 (AYAQ…ARRS) and 149 to 182 (GVYY…QDFP).

It localises to the cell membrane. In Treponema pallidum (strain Nichols), this protein is TPR repeat-containing protein TP_0282.